We begin with the raw amino-acid sequence, 477 residues long: Ribulose bisphosphate carboxylase large chain (477 aa).

Positions 1–2 (MS) are excised as a propeptide. Pro-3 carries the N-acetylproline modification. Residue Lys-14 is modified to N6,N6,N6-trimethyllysine. Substrate contacts are provided by Asn-123 and Thr-173. Lys-175 (proton acceptor) is an active-site residue. Lys-177 provides a ligand contact to substrate. Lys-201, Asp-203, and Glu-204 together coordinate Mg(2+). At Lys-201 the chain carries N6-carboxylysine. His-294 functions as the Proton acceptor in the catalytic mechanism. Arg-295, His-327, and Ser-379 together coordinate substrate.

This sequence belongs to the RuBisCO large chain family. Type I subfamily. As to quaternary structure, heterohexadecamer of 8 large chains and 8 small chains; disulfide-linked. The disulfide link is formed within the large subunit homodimers. Mg(2+) serves as cofactor. In terms of processing, the disulfide bond which can form in the large chain dimeric partners within the hexadecamer appears to be associated with oxidative stress and protein turnover.

It localises to the plastid. The protein localises to the chloroplast. It catalyses the reaction 2 (2R)-3-phosphoglycerate + 2 H(+) = D-ribulose 1,5-bisphosphate + CO2 + H2O. The enzyme catalyses D-ribulose 1,5-bisphosphate + O2 = 2-phosphoglycolate + (2R)-3-phosphoglycerate + 2 H(+). RuBisCO catalyzes two reactions: the carboxylation of D-ribulose 1,5-bisphosphate, the primary event in carbon dioxide fixation, as well as the oxidative fragmentation of the pentose substrate in the photorespiration process. Both reactions occur simultaneously and in competition at the same active site. This chain is Ribulose bisphosphate carboxylase large chain, found in Nicotiana tomentosiformis (Tobacco).